The primary structure comprises 294 residues: 4-hydroxy-tetrahydrodipicolinate synthase (294 aa).

Threonine 45 is a pyruvate binding site. Tyrosine 133 acts as the Proton donor/acceptor in catalysis. Residue lysine 162 is the Schiff-base intermediate with substrate of the active site. Isoleucine 204 provides a ligand contact to pyruvate.

The protein belongs to the DapA family. As to quaternary structure, homotetramer; dimer of dimers.

It localises to the cytoplasm. The catalysed reaction is L-aspartate 4-semialdehyde + pyruvate = (2S,4S)-4-hydroxy-2,3,4,5-tetrahydrodipicolinate + H2O + H(+). It functions in the pathway amino-acid biosynthesis; L-lysine biosynthesis via DAP pathway; (S)-tetrahydrodipicolinate from L-aspartate: step 3/4. Catalyzes the condensation of (S)-aspartate-beta-semialdehyde [(S)-ASA] and pyruvate to 4-hydroxy-tetrahydrodipicolinate (HTPA). The chain is 4-hydroxy-tetrahydrodipicolinate synthase from Bartonella henselae (strain ATCC 49882 / DSM 28221 / CCUG 30454 / Houston 1) (Rochalimaea henselae).